The primary structure comprises 150 residues: 3-hydroxyacyl-[acyl-carrier-protein] dehydratase FabZ (150 aa).

Histidine 54 is an active-site residue.

Belongs to the thioester dehydratase family. FabZ subfamily.

It is found in the cytoplasm. It carries out the reaction a (3R)-hydroxyacyl-[ACP] = a (2E)-enoyl-[ACP] + H2O. Involved in unsaturated fatty acids biosynthesis. Catalyzes the dehydration of short chain beta-hydroxyacyl-ACPs and long chain saturated and unsaturated beta-hydroxyacyl-ACPs. The protein is 3-hydroxyacyl-[acyl-carrier-protein] dehydratase FabZ of Colwellia psychrerythraea (strain 34H / ATCC BAA-681) (Vibrio psychroerythus).